We begin with the raw amino-acid sequence, 538 residues long: Lipid scramblase CLPTM1L (538 aa).

The Cytoplasmic portion of the chain corresponds to 1 to 10 (MWSGRSSFTS). Residues 11 to 31 (LVVGVFVVYVVHTCWVMYGIV) traverse the membrane as a helical segment. Residues 32–284 (YTRPCSGDAN…VKGIFVDTNL (253 aa)) lie on the Extracellular side of the membrane. 2 N-linked (GlcNAc...) asparagine glycosylation sites follow: Asn-91 and Asn-101. The helical transmembrane segment at 285 to 305 (YFLALTFFVAAFHLLFDFLAF) threads the bilayer. Topologically, residues 306–324 (KNDISFWKKKKSMIGMSTK) are cytoplasmic. The helical transmembrane segment at 325-342 (AVLWRCFSTVVIFLFLLD) threads the bilayer. Topologically, residues 343 to 346 (EQTS) are extracellular. A helical membrane pass occupies residues 347 to 364 (LLVLVPAGVGAAIELWKV). Residues 365–402 (KKALKMTILWRGLMPEFELGTYSESERKTEEYDTQAMK) are Cytoplasmic-facing. A helical transmembrane segment spans residues 403 to 423 (YLSYLLYPLCVGGAVYSLLNI). Topologically, residues 424–428 (KYKSW) are extracellular. Residues 429-449 (YSWLINSFVNGVYAFGFLFML) traverse the membrane as a helical segment. The Cytoplasmic portion of the chain corresponds to 450–538 (PQLFVNYKLK…EKAARAPHTD (89 aa)).

The protein belongs to the CLPTM1 family.

It localises to the endoplasmic reticulum membrane. It carries out the reaction a 6-(alpha-D-glucosaminyl)-1-(1,2-diacyl-sn-glycero-3-phospho)-1D-myo-inositol(in) = a 6-(alpha-D-glucosaminyl)-1-(1,2-diacyl-sn-glycero-3-phospho)-1D-myo-inositol(out). It catalyses the reaction 6-(alpha-D-glucosaminyl)-(1-octadecanoyl,2-(9Z)-octadecenoyl-sn-glycero-3-phospho)-1D-myo-inositol(in) = 6-(alpha-D-glucosaminyl)-(1-octadecanoyl,2-(9Z)-octadecenoyl-sn-glycero-3-phospho)-1D-myo-inositol(out). The catalysed reaction is a 1,2-diacyl-sn-glycero-3-phospho-(1D-myo-inositol)(in) = a 1,2-diacyl-sn-glycero-3-phospho-(1D-myo-inositol)(out). The enzyme catalyses a 1,2-diacyl-sn-glycero-3-phosphocholine(in) = a 1,2-diacyl-sn-glycero-3-phosphocholine(out). It carries out the reaction a 1,2-diacyl-sn-glycero-3-phosphoethanolamine(in) = a 1,2-diacyl-sn-glycero-3-phosphoethanolamine(out). In terms of biological role, scramblase that mediates the translocation of glucosaminylphosphatidylinositol (alpha-D-GlcN-(1-6)-(1,2-diacyl-sn-glycero-3-phospho)-1D-myo-inositol, GlcN-PI) across the endoplasmic reticulum (ER) membrane, from the cytosolic leaflet to the luminal leaflet of the ER membrane, where it participates in the biosynthesis of glycosylphosphatidylinositol (GPI). GPI is a lipid glycoconjugate involved in post-translational modification of proteins. Can also translocate 1,2-diacyl-sn-glycero-3-phospho-(1D-myo-inositol) (phosphatidylinositol or PI), as well as several other phospholipids (1,2-diacyl-sn-glycero-3-phosphocholine, 1,2-diacyl-sn-glycero-3-phosphoethanolamine), and N-acetylglucosaminylphosphatidylinositol (GlcNAc-PI) in vitro. This Pongo abelii (Sumatran orangutan) protein is Lipid scramblase CLPTM1L (CLPTM1L).